The chain runs to 142 residues: Prefoldin subunit alpha 1 (142 aa).

This sequence belongs to the prefoldin subunit alpha family. Heterohexamer of two alpha and four beta subunits.

The protein localises to the cytoplasm. In terms of biological role, molecular chaperone capable of stabilizing a range of proteins. Seems to fulfill an ATP-independent, HSP70-like function in archaeal de novo protein folding. In Methanocaldococcus jannaschii (strain ATCC 43067 / DSM 2661 / JAL-1 / JCM 10045 / NBRC 100440) (Methanococcus jannaschii), this protein is Prefoldin subunit alpha 1 (pfdA1).